Reading from the N-terminus, the 396-residue chain is CCA-adding enzyme (396 aa).

The ATP site is built by glycine 27 and arginine 30. The CTP site is built by glycine 27 and arginine 30. Aspartate 40 and aspartate 42 together coordinate Mg(2+). Residues arginine 111, aspartate 154, arginine 157, arginine 160, and arginine 163 each coordinate ATP. Positions 111, 154, 157, 160, and 163 each coordinate CTP.

It belongs to the tRNA nucleotidyltransferase/poly(A) polymerase family. Bacterial CCA-adding enzyme type 3 subfamily. As to quaternary structure, homodimer. Requires Mg(2+) as cofactor.

It catalyses the reaction a tRNA precursor + 2 CTP + ATP = a tRNA with a 3' CCA end + 3 diphosphate. The enzyme catalyses a tRNA with a 3' CCA end + 2 CTP + ATP = a tRNA with a 3' CCACCA end + 3 diphosphate. Its function is as follows. Catalyzes the addition and repair of the essential 3'-terminal CCA sequence in tRNAs without using a nucleic acid template. Adds these three nucleotides in the order of C, C, and A to the tRNA nucleotide-73, using CTP and ATP as substrates and producing inorganic pyrophosphate. tRNA 3'-terminal CCA addition is required both for tRNA processing and repair. Also involved in tRNA surveillance by mediating tandem CCA addition to generate a CCACCA at the 3' terminus of unstable tRNAs. While stable tRNAs receive only 3'-terminal CCA, unstable tRNAs are marked with CCACCA and rapidly degraded. This chain is CCA-adding enzyme, found in Bacillus velezensis (strain DSM 23117 / BGSC 10A6 / LMG 26770 / FZB42) (Bacillus amyloliquefaciens subsp. plantarum).